Reading from the N-terminus, the 377-residue chain is Chaperone protein DnaJ (377 aa).

The J domain occupies 8 to 73 (CYYETLEVER…DKRAAYDRFG (66 aa)). The CR-type zinc finger occupies 135 to 213 (GKTAQIEIPV…CSGQGRVTRE (79 aa)). Zn(2+) contacts are provided by C148, C151, C165, C168, C187, C190, C201, and C204. CXXCXGXG motif repeat units lie at residues 148 to 155 (CEACSGIG), 165 to 172 (CSTCGGAG), 187 to 194 (CPGCQGRG), and 201 to 208 (CPSCSGQG).

It belongs to the DnaJ family. Homodimer. The cofactor is Zn(2+).

The protein resides in the cytoplasm. Participates actively in the response to hyperosmotic and heat shock by preventing the aggregation of stress-denatured proteins and by disaggregating proteins, also in an autonomous, DnaK-independent fashion. Unfolded proteins bind initially to DnaJ; upon interaction with the DnaJ-bound protein, DnaK hydrolyzes its bound ATP, resulting in the formation of a stable complex. GrpE releases ADP from DnaK; ATP binding to DnaK triggers the release of the substrate protein, thus completing the reaction cycle. Several rounds of ATP-dependent interactions between DnaJ, DnaK and GrpE are required for fully efficient folding. Also involved, together with DnaK and GrpE, in the DNA replication of plasmids through activation of initiation proteins. The chain is Chaperone protein DnaJ from Bradyrhizobium diazoefficiens (strain JCM 10833 / BCRC 13528 / IAM 13628 / NBRC 14792 / USDA 110).